The sequence spans 114 residues: Immunomodulatory protein FIP-Fve (114 aa).

The residue at position 1 (Ser-1) is an N-acetylserine.

This sequence belongs to the fungal immunomodulatory protein (FIP) family. As to quaternary structure, homodimer.

Functionally, lectin with specificity for complex cell-surface carbohydrates. Possesses immunomodulatory activity, stimulates lymphocyte mitogenesis, suppresses systemic anaphylaxis reactions and edema, enhances transcription of IL-2, IFN-gamma and TNF-alpha and hemagglutinates red blood cells. In Flammulina velutipes (Agaricus velutipes), this protein is Immunomodulatory protein FIP-Fve.